The sequence spans 570 residues: Hemagglutinin-neuraminidase (570 aa).

Over Met1–Arg26 the chain is Intravirion. The helical transmembrane segment at Ile27–Met48 threads the bilayer. Over Glu49 to Val570 the chain is Virion surface. Asn119 carries N-linked (GlcNAc...) asparagine; by host glycosylation. Residues Gly124–Tyr152 form an important for interaction with fusion/F protein region. 3 disulfides stabilise this stretch: Cys172–Cys195, Cys185–Cys246, and Cys237–Cys250. The tract at residues Asn233–Ser238 is involved in neuraminidase activity. N-linked (GlcNAc...) asparagine; by host glycans are attached at residues Asn340 and Asn432. 2 disulfides stabilise this stretch: Cys343/Cys460 and Cys454/Cys464. N-linked (GlcNAc...) asparagine; by host glycans are attached at residues Asn480, Asn507, and Asn537. Cys530 and Cys541 form a disulfide bridge.

The protein belongs to the paramyxoviruses hemagglutinin-neuraminidase family. As to quaternary structure, homotetramer; composed of disulfide-linked homodimers. Interacts with F protein trimer. Interacts with host CG-1B; this interaction inhibits viral adsorption and replication rather than internalization.

Its subcellular location is the virion membrane. It is found in the host cell membrane. It carries out the reaction Hydrolysis of alpha-(2-&gt;3)-, alpha-(2-&gt;6)-, alpha-(2-&gt;8)- glycosidic linkages of terminal sialic acid residues in oligosaccharides, glycoproteins, glycolipids, colominic acid and synthetic substrates.. Functionally, mediates the viral entry into the host cell together with fusion/F protein. Attaches the virus to sialic acid-containing cell receptors and thereby initiates infection. Binding of HN protein to the receptor induces a conformational change that allows the F protein to trigger virion/cell membranes fusion. In terms of biological role, neuraminidase activity ensures the efficient spread of the virus by dissociating the mature virions from the neuraminic acid containing glycoproteins. The polypeptide is Hemagglutinin-neuraminidase (HN) (Gallus gallus (Chicken)).